The primary structure comprises 81 residues: Three-finger toxin MALT0051C (81 aa).

An N-terminal signal peptide occupies residues 1–21 (MKTLLLTLVVVTVVCLDFGHT). 4 disulfides stabilise this stretch: cysteine 24–cysteine 43, cysteine 38–cysteine 60, cysteine 62–cysteine 73, and cysteine 74–cysteine 79.

It belongs to the three-finger toxin family. Short-chain subfamily. Type I alpha-neurotoxin sub-subfamily. As to expression, expressed by the venom gland.

Its subcellular location is the secreted. In terms of biological role, binds to muscle nicotinic acetylcholine receptor (nAChR) and inhibit acetylcholine from binding to the receptor, thereby impairing neuromuscular transmission. This Micrurus altirostris (Uruguayan coral snake) protein is Three-finger toxin MALT0051C.